The sequence spans 637 residues: Threonine--tRNA ligase (637 aa).

The region spanning 1–61 is the TGS domain; sequence MLNITLPDGS…VEDSAVQIIT (61 aa). A catalytic region spans residues 242–533; the sequence is DHRKLGKQLD…LIENHAGSFP (292 aa). The Zn(2+) site is built by Cys333, His384, and His510.

This sequence belongs to the class-II aminoacyl-tRNA synthetase family. As to quaternary structure, homodimer. The cofactor is Zn(2+).

The protein localises to the cytoplasm. The enzyme catalyses tRNA(Thr) + L-threonine + ATP = L-threonyl-tRNA(Thr) + AMP + diphosphate + H(+). In terms of biological role, catalyzes the attachment of threonine to tRNA(Thr) in a two-step reaction: L-threonine is first activated by ATP to form Thr-AMP and then transferred to the acceptor end of tRNA(Thr). Also edits incorrectly charged L-seryl-tRNA(Thr). This chain is Threonine--tRNA ligase, found in Neisseria meningitidis serogroup A / serotype 4A (strain DSM 15465 / Z2491).